The following is a 469-amino-acid chain: MTVQTFTPNQTTTLDTAKKTIEQQSQELTPSGGNKIGFVSLGCPKNLVDSERILTQLRTEGYEIVNSYHDSDVVIVNTCGFIDSAVQESLDTIGEALKENGKVIVTGCLGAREDEIREVHPGVLGITGPHAYENVLEHVHQFAPKPEHNPFTSLVPDHGVKLTPKHYAYLKISEGCNHRCTFCIIPSMRGDLVSRPVGEILSEAERLKNAGVKELLVISQDTSAYGVDSKHSLGFANGSPVRQNIKALSEELGKMGIWVRLHYVYPYPHVDDLIPLMAEGKILPYLDIPFQHASPNVLKAMKRPGRAERTLDQIKKWREICPELVIRSTFIVGFPGETDEDFEMLLEWLKEAQLDRVGCFKYSPVEGAAANDIDDQISEEVKQERFERFMLVQQEISAAKLQKRIGSTMKVIIDEVDEEGAIGRTYADAPEIDGLVYLNGETSLKAGELVDVLIEHADEYDLWGSLVRA.

Positions 34-144 constitute an MTTase N-terminal domain; the sequence is NKIGFVSLGC…VLEHVHQFAP (111 aa). Residues Cys-43, Cys-79, Cys-108, Cys-176, Cys-180, and Cys-183 each coordinate [4Fe-4S] cluster. The 238-residue stretch at 162–399 folds into the Radical SAM core domain; that stretch reads LTPKHYAYLK…MLVQQEISAA (238 aa). One can recognise a TRAM domain in the interval 402–468; it reads QKRIGSTMKV…EYDLWGSLVR (67 aa).

The protein belongs to the methylthiotransferase family. RimO subfamily. The cofactor is [4Fe-4S] cluster.

It is found in the cytoplasm. The catalysed reaction is L-aspartate(89)-[ribosomal protein uS12]-hydrogen + (sulfur carrier)-SH + AH2 + 2 S-adenosyl-L-methionine = 3-methylsulfanyl-L-aspartate(89)-[ribosomal protein uS12]-hydrogen + (sulfur carrier)-H + 5'-deoxyadenosine + L-methionine + A + S-adenosyl-L-homocysteine + 2 H(+). In terms of biological role, catalyzes the methylthiolation of an aspartic acid residue of ribosomal protein uS12. The sequence is that of Ribosomal protein uS12 methylthiotransferase RimO from Vibrio vulnificus (strain YJ016).